A 751-amino-acid chain; its full sequence is MALQPVPRMRRTLQNTQHTYSLGRRIYDVKTYPVQSPQGATILIYGHENGATVVWRGGRRLKPPKPQTNEKRNGTKPEDAVMIIDSDDETGPTFVDKPEFEDSPSVADGSVAEIIQTLDLALGTAVNHIAVLPMPPCAAEDASWNGANILKTKIVFAVTCATNDVYVITLPLTPPSHEAKARPELRKSLLAGNAGKGVWGETLTLLTGPSRSCNGVAISLVKHRSSSRSRSSERSAAQAAPITRVVVAAHSREASGTLRLWDVPLEAKPGTINRVEPFQTEYLPSPLTSISFNPVNLTQLLTVASPHAVRIYDYATASLPSDDTSEGPFPSQGSWLISLYPPFARGPAMSTSRKPIVAAEWIARGRAILTLLADGQWGIWDLDGASPTAAGGGSNLFSKTSAGLRGTAITAFSVTGHLEGTSPLRNPTTQKASSSSSGEFVPMTPHTRRDAIATAFGGSPEKLAAVRGGITVAQLPSTLTSGAGDESAVLFLGGADPIVCVIPVLSKFWDSQLRRAAGGGVNLWSGAQPTRMIRLTDLSAGLLGERCTGAVAITKAVRANASTNGILKEDDNSGSQGLPIEVLLQGESRLVIVHENGDAPTSSLTSRLLGARKKQRDEFKSVNAIVAYPPLEKPSVSFNLNLTQRPEKPGTLFAPRSRHSKSLFEQSIDTIPSTDAGDEETIPATSAPSSQQGFMFATDLELAADLPDDEADAEGRDVEQELLDIMEIDRELEQLEQARERGRKRVFFEEG.

Residues 21-65 (SLGRRIYDVKTYPVQSPQGATILIYGHENGATVVWRGGRRLKPPK) form a WD 1 repeat. The interval 57–77 (GGRRLKPPKPQTNEKRNGTKP) is disordered. Over residues 68 to 77 (TNEKRNGTKP) the composition is skewed to basic and acidic residues. 4 WD repeats span residues 162-209 (TNDV…LTGP), 237-271 (AQAA…KPGT), 282-322 (YLPS…LPSD), and 351-390 (TSRK…PTAA). Residues 419–443 (EGTSPLRNPTTQKASSSSSGEFVPM) form a disordered region. Over residues 423-438 (PLRNPTTQKASSSSSG) the composition is skewed to polar residues. 2 WD repeats span residues 455–492 (AFGG…VLFL) and 494–534 (GADP…RMIR). The disordered stretch occupies residues 671–692 (IPSTDAGDEETIPATSAPSSQQ). Over residues 683–692 (PATSAPSSQQ) the composition is skewed to polar residues. Residues 716–750 (RDVEQELLDIMEIDRELEQLEQARERGRKRVFFEE) are a coiled coil.

The nuclear pore complex (NPC) constitutes the exclusive means of nucleocytoplasmic transport. NPCs allow the passive diffusion of ions and small molecules and the active, nuclear transport receptor-mediated bidirectional transport of macromolecules such as proteins, RNAs, ribonucleoparticles (RNPs), and ribosomal subunits across the nuclear envelope. The 55-60 MDa NPC is composed of at least 28 different subunits: AMO1, ELYS, GLE1, GLE2, MLP1, NDC1, NIC96, NSP1, NUP133, NUP145, NUP152, NUP159, NUP170, NUP188, NUP192, NUP37, NUP49, NUP53, NUP56, NUP57, NUP82, NUP84, NUP85, POM152, POM33, POM34, SEC13 and SEH1. Due to its 8-fold rotational symmetry, all subunits are present with 8 copies or multiples thereof.

The protein resides in the nucleus. It localises to the nuclear pore complex. In Chaetomium thermophilum (strain DSM 1495 / CBS 144.50 / IMI 039719) (Thermochaetoides thermophila), this protein is Nucleoporin NUP37 (NUP37).